Reading from the N-terminus, the 176-residue chain is ATP-dependent protease subunit HslV (176 aa).

The active site involves threonine 2. Residues glycine 157, cysteine 160, and threonine 163 each contribute to the Na(+) site.

This sequence belongs to the peptidase T1B family. HslV subfamily. In terms of assembly, a double ring-shaped homohexamer of HslV is capped on each side by a ring-shaped HslU homohexamer. The assembly of the HslU/HslV complex is dependent on binding of ATP.

It localises to the cytoplasm. The catalysed reaction is ATP-dependent cleavage of peptide bonds with broad specificity.. Its activity is regulated as follows. Allosterically activated by HslU binding. Functionally, protease subunit of a proteasome-like degradation complex believed to be a general protein degrading machinery. This chain is ATP-dependent protease subunit HslV, found in Escherichia coli O139:H28 (strain E24377A / ETEC).